The following is a 486-amino-acid chain: Bifunctional protein GlmU (486 aa).

A pyrophosphorylase region spans residues 1-241 (MSASDSSSAV…ARELAGVNDR (241 aa)). UDP-N-acetyl-alpha-D-glucosamine-binding positions include 13-16 (LAAG), K27, Q84, and 89-90 (GT). D114 contributes to the Mg(2+) binding site. Residues G151, E166, N181, and N239 each contribute to the UDP-N-acetyl-alpha-D-glucosamine site. Residue N239 participates in Mg(2+) binding. A linker region spans residues 242–262 (VQLAEAGAELNRRTVEAAMRG). The segment at 263–486 (GATIVDPATT…AQNSVPNQEG (224 aa)) is N-acetyltransferase. The UDP-N-acetyl-alpha-D-glucosamine site is built by R344 and K362. The active-site Proton acceptor is the H374. Positions 377 and 388 each coordinate UDP-N-acetyl-alpha-D-glucosamine. Acetyl-CoA contacts are provided by residues A391, 397–398 (NY), S416, and A434. The tract at residues 464–486 (KRPGTAAADAAAAAQNSVPNQEG) is disordered.

The protein in the N-terminal section; belongs to the N-acetylglucosamine-1-phosphate uridyltransferase family. It in the C-terminal section; belongs to the transferase hexapeptide repeat family. In terms of assembly, homotrimer. Mg(2+) is required as a cofactor.

It is found in the cytoplasm. The enzyme catalyses alpha-D-glucosamine 1-phosphate + acetyl-CoA = N-acetyl-alpha-D-glucosamine 1-phosphate + CoA + H(+). It catalyses the reaction N-acetyl-alpha-D-glucosamine 1-phosphate + UTP + H(+) = UDP-N-acetyl-alpha-D-glucosamine + diphosphate. It participates in nucleotide-sugar biosynthesis; UDP-N-acetyl-alpha-D-glucosamine biosynthesis; N-acetyl-alpha-D-glucosamine 1-phosphate from alpha-D-glucosamine 6-phosphate (route II): step 2/2. Its pathway is nucleotide-sugar biosynthesis; UDP-N-acetyl-alpha-D-glucosamine biosynthesis; UDP-N-acetyl-alpha-D-glucosamine from N-acetyl-alpha-D-glucosamine 1-phosphate: step 1/1. The protein operates within bacterial outer membrane biogenesis; LPS lipid A biosynthesis. Its function is as follows. Catalyzes the last two sequential reactions in the de novo biosynthetic pathway for UDP-N-acetylglucosamine (UDP-GlcNAc). The C-terminal domain catalyzes the transfer of acetyl group from acetyl coenzyme A to glucosamine-1-phosphate (GlcN-1-P) to produce N-acetylglucosamine-1-phosphate (GlcNAc-1-P), which is converted into UDP-GlcNAc by the transfer of uridine 5-monophosphate (from uridine 5-triphosphate), a reaction catalyzed by the N-terminal domain. The chain is Bifunctional protein GlmU from Corynebacterium efficiens (strain DSM 44549 / YS-314 / AJ 12310 / JCM 11189 / NBRC 100395).